The following is a 179-amino-acid chain: Large ribosomal subunit protein uL5 (179 aa).

The protein belongs to the universal ribosomal protein uL5 family. Part of the 50S ribosomal subunit; part of the 5S rRNA/L5/L18/L25 subcomplex. Contacts the 5S rRNA and the P site tRNA. Forms a bridge to the 30S subunit in the 70S ribosome.

In terms of biological role, this is one of the proteins that bind and probably mediate the attachment of the 5S RNA into the large ribosomal subunit, where it forms part of the central protuberance. In the 70S ribosome it contacts protein S13 of the 30S subunit (bridge B1b), connecting the 2 subunits; this bridge is implicated in subunit movement. Contacts the P site tRNA; the 5S rRNA and some of its associated proteins might help stabilize positioning of ribosome-bound tRNAs. In Janthinobacterium sp. (strain Marseille) (Minibacterium massiliensis), this protein is Large ribosomal subunit protein uL5.